A 352-amino-acid chain; its full sequence is Ion-translocating oxidoreductase complex subunit D (352 aa).

The next 5 membrane-spanning stretches (helical) occupy residues 20–40, 42–62, 78–109, 123–143, and 148–168; these read IMLL…WFFG, GTLV…ALVL, ALLT…VIIA, PAMI…TSWL, and IAVN…GHTA. FMN phosphoryl threonine is present on Thr-187. Helical transmembrane passes span 214–234, 242–262, 267–287, 301–321, and 322–342; these read ILAG…GVWL, WHIP…GWLF, LAAP…FFIL, LIFG…GGYP, and DGVA…DYYT.

It belongs to the NqrB/RnfD family. The complex is composed of six subunits: RsxA, RsxB, RsxC, RsxD, RsxE and RsxG. It depends on FMN as a cofactor.

The protein resides in the cell inner membrane. Functionally, part of a membrane-bound complex that couples electron transfer with translocation of ions across the membrane. Required to maintain the reduced state of SoxR. The polypeptide is Ion-translocating oxidoreductase complex subunit D (Escherichia coli O6:K15:H31 (strain 536 / UPEC)).